A 288-amino-acid polypeptide reads, in one-letter code: Pyridoxal kinase PdxY (288 aa).

Substrate contacts are provided by residues Ser-10 and 45–46; that span reads TQ. Residues Asp-112, Ala-143, Glu-148, and Lys-181 each coordinate ATP. Asp-222 serves as a coordination point for substrate.

This sequence belongs to the pyridoxine kinase family. PdxY subfamily. Homodimer. Mg(2+) is required as a cofactor.

The catalysed reaction is pyridoxal + ATP = pyridoxal 5'-phosphate + ADP + H(+). It participates in cofactor metabolism; pyridoxal 5'-phosphate salvage; pyridoxal 5'-phosphate from pyridoxal: step 1/1. Functionally, pyridoxal kinase involved in the salvage pathway of pyridoxal 5'-phosphate (PLP). Catalyzes the phosphorylation of pyridoxal to PLP. This Paraburkholderia xenovorans (strain LB400) protein is Pyridoxal kinase PdxY.